Consider the following 232-residue polypeptide: Ovalbumin-related protein X (232 aa).

This sequence belongs to the serpin family. Ov-serpin subfamily. Expressed in egg white (at protein level).

This chain is Ovalbumin-related protein X (SERPINB14C), found in Gallus gallus (Chicken).